A 500-amino-acid polypeptide reads, in one-letter code: Glycogen synthase (500 aa).

Lys20 contacts ADP-alpha-D-glucose.

It belongs to the glycosyltransferase 1 family. Bacterial/plant glycogen synthase subfamily.

It carries out the reaction [(1-&gt;4)-alpha-D-glucosyl](n) + ADP-alpha-D-glucose = [(1-&gt;4)-alpha-D-glucosyl](n+1) + ADP + H(+). It functions in the pathway glycan biosynthesis; glycogen biosynthesis. Synthesizes alpha-1,4-glucan chains using ADP-glucose. The polypeptide is Glycogen synthase (Desulforudis audaxviator (strain MP104C)).